The primary structure comprises 520 residues: Cytochrome P450 monooxygenase TRI4 (520 aa).

Residues 10–30 (LVNIPISHAVGVVAASTVIYF) traverse the membrane as a helical segment. A glycan (N-linked (GlcNAc...) asparagine) is linked at Asn-447. Residue Cys-455 participates in heme binding.

Belongs to the cytochrome P450 family. Heme is required as a cofactor.

The protein resides in the membrane. It functions in the pathway sesquiterpene biosynthesis; trichothecene biosynthesis. Cytochrome P450 monooxygenase; part of the core gene cluster that mediates the biosynthesis of trichothecenes, a very large family of chemically related bicyclic sesquiterpene compounds acting as mycotoxins, including T2-toxin. The biosynthesis of trichothecenes begins with the cyclization of farnesyl diphosphate to trichodiene and is catalyzed by the trichodiene synthase TRI5. Trichodiene undergoes a series of oxygenations catalyzed by the cytochrome P450 monooxygenase TRI4. TRI4 controls the addition of four oxygens at C-2, C-3, C-11, and the C-12, C-13-epoxide to form the intermediate isotrichotriol. Isotrichotriol then undergoes a non-enzymatic isomerization and cyclization to form isotrichodermol. During this process, the oxygen at the C-2 position becomes the pyran ring oxygen and the hydroxyl group at C-11 is lost. More complex type A trichothecenes are built by modifying isotrichodermol through a series of paired hydroxylation and acetylation or acylation steps. Isotrichodermol is converted to isotrichodermin by the acetyltransferase TRI101. TRI101 encodes a C-3 transacetylase that acts as a self-protection or resistance factor during biosynthesis and that the presence of a free C-3 hydroxyl group is a key component of Fusarium trichothecene phytotoxicity. A second hydroxyl group is added to C-15 by the trichothecene C-15 hydroxylase TRI11, producing 15-decalonectrin, which is then acetylated by TRI3, producing calonectrin. A third hydroxyl group is added at C-4 by the cytochrome P450 monooxygenase TRI13, converting calonectrin to 3,15-diacetoxyspirpenol, which is subsequently acetylated by the acetyltransferase TRI7. A fourth hydroxyl group is added to C-8 by the cytochrome P450 monooxygenase TRI1, followed by the addition of an isovaleryl moiety by TRI16. Finally, the acetyl group is removed from the C-3 position by the trichothecene C-3 esterase TRI8 to produce T-2 toxin. In Fusarium sporotrichioides, this protein is Cytochrome P450 monooxygenase TRI4.